The primary structure comprises 305 residues: Thioredoxin reductase (305 aa).

Residue 28 to 35 (LGIETSSQ) coordinates FAD. A disulfide bridge links Cys129 with Cys132. Residue 272–281 (DCCDWIYRQA) participates in FAD binding.

It belongs to the class-II pyridine nucleotide-disulfide oxidoreductase family. In terms of assembly, homodimer. FAD is required as a cofactor.

It is found in the cytoplasm. The enzyme catalyses [thioredoxin]-dithiol + NADP(+) = [thioredoxin]-disulfide + NADPH + H(+). The chain is Thioredoxin reductase (TRXB) from Spironucleus barkhanus.